The primary structure comprises 791 residues: Protein FAM47A (791 aa).

3 disordered regions span residues 195–257 (PVSH…TRRR), 274–409 (EDAR…TGVC), and 449–573 (VKKT…SEPP). Composition is skewed to basic and acidic residues over residues 274–288 (EDARAPCEGREKTTD) and 333–342 (GESHLRLEHS). Positions 349-358 (SLRSEPSETG) are enriched in polar residues. Positions 449–462 (VKKTKEPTEPHKSP) are enriched in basic and acidic residues.

It belongs to the FAM47 family.

The protein is Protein FAM47A (FAM47A) of Homo sapiens (Human).